The primary structure comprises 150 residues: Urease accessory protein UreE (150 aa).

The protein belongs to the UreE family.

It localises to the cytoplasm. Its function is as follows. Involved in urease metallocenter assembly. Binds nickel. Probably functions as a nickel donor during metallocenter assembly. This Staphylococcus epidermidis (strain ATCC 35984 / DSM 28319 / BCRC 17069 / CCUG 31568 / BM 3577 / RP62A) protein is Urease accessory protein UreE.